Reading from the N-terminus, the 377-residue chain is Spore coat protein SA (377 aa).

Belongs to the glycosyltransferase group 1 family. Glycosyltransferase 4 subfamily.

The protein is Spore coat protein SA (cotSA) of Bacillus subtilis (strain 168).